The sequence spans 210 residues: MELQLAIDLLNKEEAAKLAQKVEEYVDIVEIGTPIVINEGLPAVQHLNENINNAKVLADLKIMDAADYEVSQAVKYGADIVTILGVAEDASIKAAVEEAHKHGKALLVDMIAVQNLEQRAKELDEMGADYIAVHTGYDLQAEGKSPLDSLRTVKSVIKNSKVAVAGGIKPDTIKDIVAEDPDLVIVGGGIANADDPVEAAKQCRAAIEGK.

It belongs to the HPS/KGPDC family. HPS subfamily.

The catalysed reaction is D-ribulose 5-phosphate + formaldehyde = D-arabino-hex-3-ulose 6-phosphate. The protein operates within one-carbon metabolism; formaldehyde assimilation via RuMP pathway; D-fructose 6-phosphate from D-ribulose 5-phosphate and formaldehyde: step 1/2. Functionally, catalyzes the condensation of ribulose 5-phosphate with formaldehyde to form 3-hexulose 6-phosphate. This chain is 3-hexulose-6-phosphate synthase, found in Staphylococcus epidermidis (strain ATCC 35984 / DSM 28319 / BCRC 17069 / CCUG 31568 / BM 3577 / RP62A).